Consider the following 258-residue polypeptide: Thiazole synthase (258 aa).

The active-site Schiff-base intermediate with DXP is the Lys-98. 1-deoxy-D-xylulose 5-phosphate contacts are provided by residues Gly-159, 185 to 186 (AG), and 207 to 208 (NT).

It belongs to the ThiG family. As to quaternary structure, homotetramer. Forms heterodimers with either ThiH or ThiS.

It localises to the cytoplasm. The enzyme catalyses [ThiS sulfur-carrier protein]-C-terminal-Gly-aminoethanethioate + 2-iminoacetate + 1-deoxy-D-xylulose 5-phosphate = [ThiS sulfur-carrier protein]-C-terminal Gly-Gly + 2-[(2R,5Z)-2-carboxy-4-methylthiazol-5(2H)-ylidene]ethyl phosphate + 2 H2O + H(+). It functions in the pathway cofactor biosynthesis; thiamine diphosphate biosynthesis. Catalyzes the rearrangement of 1-deoxy-D-xylulose 5-phosphate (DXP) to produce the thiazole phosphate moiety of thiamine. Sulfur is provided by the thiocarboxylate moiety of the carrier protein ThiS. In vitro, sulfur can be provided by H(2)S. In Cytophaga hutchinsonii (strain ATCC 33406 / DSM 1761 / CIP 103989 / NBRC 15051 / NCIMB 9469 / D465), this protein is Thiazole synthase.